Reading from the N-terminus, the 64-residue chain is MRVLYLLFSFLFIFLMPLPGVFGGIGDPVTCLKNGAICHPVFCPRRYKQIGTCGLPGTKCCKKP.

Residues 1-23 form the signal peptide; that stretch reads MRVLYLLFSFLFIFLMPLPGVFG. Cystine bridges form between cysteine 31–cysteine 60, cysteine 38–cysteine 53, and cysteine 43–cysteine 61. Residues 33–48 are phosphatidylinositol 4,5-bisphosphate (PIP2) binding; that stretch reads KNGAICHPVFCPRRYK.

Belongs to the beta-defensin family. LAP/TAP subfamily. Monomer. Homodimer.

It localises to the secreted. In terms of biological role, exhibits antimicrobial activity against Gram-negative bacteria and Gram-positive bacteria, with highest activity against Gram-negative bacteria. Antimicrobial activity against P.aruginosa seems to be salt-sensitive and is reduced with high salt concentrations greater than 25 mM. Also exhibits antimicrobial activity against the yeast C.albicans. Permeabilizes C.albicans cell membranes via targeting plasma membrane lipid phosphatidylinositol 4,5-bisphosphate (PIP2), thereby leading to cell fragmentation and cell death. Acts as a ligand for C-C chemokine receptor CCR6. Binds to CCR6 and induces chemotactic activity of CCR6-expressing cells, such as immature dendritic cells and memory T cells. This chain is Defensin beta 4A (DEFB4A), found in Macaca mulatta (Rhesus macaque).